The sequence spans 146 residues: Holo-[acyl-carrier-protein] synthase (146 aa).

Residues aspartate 9 and glutamate 63 each contribute to the Mg(2+) site.

Belongs to the P-Pant transferase superfamily. AcpS family. Mg(2+) is required as a cofactor.

The protein localises to the cytoplasm. The enzyme catalyses apo-[ACP] + CoA = holo-[ACP] + adenosine 3',5'-bisphosphate + H(+). Functionally, transfers the 4'-phosphopantetheine moiety from coenzyme A to a Ser of acyl-carrier-protein. The polypeptide is Holo-[acyl-carrier-protein] synthase (Burkholderia ambifaria (strain ATCC BAA-244 / DSM 16087 / CCUG 44356 / LMG 19182 / AMMD) (Burkholderia cepacia (strain AMMD))).